A 504-amino-acid polypeptide reads, in one-letter code: Taurochenodeoxycholic 6 alpha-hydroxylase (504 aa).

The next 2 helical transmembrane spans lie at 6–26 and 110–130; these read LASVSGLLQVASLLGLLLLLL and APVLYRLLIPWIGCGLLLLNG. Cys451 serves as a coordination point for heme.

It belongs to the cytochrome P450 family. Heme serves as cofactor. As to expression, primarily expressed in liver. Low expression in kidney.

It is found in the endoplasmic reticulum membrane. The catalysed reaction is taurochenodeoxycholate + reduced [NADPH--hemoprotein reductase] + O2 = taurohyocholate + oxidized [NADPH--hemoprotein reductase] + H2O + H(+). It catalyses the reaction lithocholate + reduced [NADPH--hemoprotein reductase] + O2 = hyodeoxycholate + oxidized [NADPH--hemoprotein reductase] + H2O + H(+). Catalyzes the 6 alpha hydroxylation oxidation of taurodeoxycholate to produce the pig specific bile acid taurohyocholic acid. The polypeptide is Taurochenodeoxycholic 6 alpha-hydroxylase (CYP4A21) (Sus scrofa (Pig)).